A 546-amino-acid chain; its full sequence is Amidase FG08078 (546 aa).

Residues K129 and S204 each act as charge relay system in the active site. The active-site Acyl-ester intermediate is S228.

The protein belongs to the amidase family.

The protein operates within mycotoxin biosynthesis. Functionally, amidase; part of the gene cluster that mediates the biosynthesis of butenolide, a mycotoxin that shows antibiotic activity but does not seem to play a major role in the spread of head blight in wheat. Butenolide is derived from glutamic acid via a 4-acetamido-2-butenoic acid intermediate. The predicted function of the NADH:flavin oxidoreductase FG08077, the cytochrome P450 monooxygenase FG08079, the decarboxylase FG08083, and the putative acetyltransferase FG08082 are consistent with this pathway, however, the respective activities of the butelonide biosynthesis cluster enzymes have still to be experimentally determined. The chain is Amidase FG08078 from Gibberella zeae (strain ATCC MYA-4620 / CBS 123657 / FGSC 9075 / NRRL 31084 / PH-1) (Wheat head blight fungus).